We begin with the raw amino-acid sequence, 417 residues long: Serine hydroxymethyltransferase (417 aa).

(6S)-5,6,7,8-tetrahydrofolate-binding positions include Leu-121 and 125 to 127; that span reads GHL. Lys-229 carries the post-translational modification N6-(pyridoxal phosphate)lysine. 355 to 357 is a binding site for (6S)-5,6,7,8-tetrahydrofolate; that stretch reads SPF.

This sequence belongs to the SHMT family. In terms of assembly, homodimer. The cofactor is pyridoxal 5'-phosphate.

Its subcellular location is the cytoplasm. It carries out the reaction (6R)-5,10-methylene-5,6,7,8-tetrahydrofolate + glycine + H2O = (6S)-5,6,7,8-tetrahydrofolate + L-serine. It functions in the pathway one-carbon metabolism; tetrahydrofolate interconversion. It participates in amino-acid biosynthesis; glycine biosynthesis; glycine from L-serine: step 1/1. Catalyzes the reversible interconversion of serine and glycine with tetrahydrofolate (THF) serving as the one-carbon carrier. This reaction serves as the major source of one-carbon groups required for the biosynthesis of purines, thymidylate, methionine, and other important biomolecules. Also exhibits THF-independent aldolase activity toward beta-hydroxyamino acids, producing glycine and aldehydes, via a retro-aldol mechanism. The sequence is that of Serine hydroxymethyltransferase from Xanthomonas axonopodis pv. citri (strain 306).